A 518-amino-acid chain; its full sequence is Probable cytosol aminopeptidase (518 aa).

The Mn(2+) site is built by Lys-270 and Asp-275. Lys-282 is a catalytic residue. The Mn(2+) site is built by Asp-293, Asp-352, and Glu-354. The active site involves Arg-356. A compositionally biased stretch (polar residues) spans 495 to 507; that stretch reads SRTTRQPGSTGET. Residues 495–518 form a disordered region; that stretch reads SRTTRQPGSTGETGSRKNRRKSKE.

It belongs to the peptidase M17 family. It depends on Mn(2+) as a cofactor.

It is found in the cytoplasm. It carries out the reaction Release of an N-terminal amino acid, Xaa-|-Yaa-, in which Xaa is preferably Leu, but may be other amino acids including Pro although not Arg or Lys, and Yaa may be Pro. Amino acid amides and methyl esters are also readily hydrolyzed, but rates on arylamides are exceedingly low.. It catalyses the reaction Release of an N-terminal amino acid, preferentially leucine, but not glutamic or aspartic acids.. Presumably involved in the processing and regular turnover of intracellular proteins. Catalyzes the removal of unsubstituted N-terminal amino acids from various peptides. In Nitrosospira multiformis (strain ATCC 25196 / NCIMB 11849 / C 71), this protein is Probable cytosol aminopeptidase.